The chain runs to 267 residues: Glutamate 5-kinase (267 aa).

Lysine 17 is an ATP binding site. Serine 57, aspartate 144, and asparagine 156 together coordinate substrate. Residues serine 176–aspartate 177 and threonine 218–lysine 224 each bind ATP.

This sequence belongs to the glutamate 5-kinase family.

The protein resides in the cytoplasm. It carries out the reaction L-glutamate + ATP = L-glutamyl 5-phosphate + ADP. Its pathway is amino-acid biosynthesis; L-proline biosynthesis; L-glutamate 5-semialdehyde from L-glutamate: step 1/2. In terms of biological role, catalyzes the transfer of a phosphate group to glutamate to form L-glutamate 5-phosphate. In Clostridium acetobutylicum (strain ATCC 824 / DSM 792 / JCM 1419 / IAM 19013 / LMG 5710 / NBRC 13948 / NRRL B-527 / VKM B-1787 / 2291 / W), this protein is Glutamate 5-kinase.